A 564-amino-acid chain; its full sequence is Efflux pump DEP3 (564 aa).

Residues 1–12 (MVYSSTSSSQNR) show a composition bias toward polar residues. Residues 1–48 (MVYSSTSSSQNRPDGEKHVEAVGSSTRIPSDELVDRGGGDTTTGKQSP) are disordered. Residues 29–38 (PSDELVDRGG) are compositionally biased toward basic and acidic residues. A run of 14 helical transmembrane segments spans residues 65–85 (STTLLFALDNTIVANIQPAII), 91–111 (LELLSWIGTGFALGTMFILLW), 122–142 (WVYIFNIFLFEAGSALCGAAP), 152–172 (VIAGVGGSGMYSGTLTYVSVL), 185–205 (STVVWGIGSVLGPVVGGAFAA), 212–232 (WGFYVNLPIGAAFAPVYFLLF), 255–275 (AVIFLAGSACLTVVLTFGGVV), 281–301 (GTVIALWTVTGILLVAFIVLL), 332–352 (FLSSGIILAMTYYVPLYFQFI), 362–382 (VRLLPLIMFMVVASMVNGFLM), 386–406 (GLIPIWYIGGSSLALIGTALM), 423–443 (ILIGAGTGSYIVAGFAIVQSL), 452–472 (AVGAMTIFQDLGMVLFLAISG), and 528–548 (TIWAFFLAAAALSVVCSFPLL).

The protein belongs to the major facilitator superfamily. TCR/Tet family.

The protein resides in the cell membrane. Its function is as follows. Efflux pump; part of the gene cluster that mediates the biosynthesis of depudecin, a highly oxidized eleven-carbon linear polyketide that acts as a histone deacetylase (HDAC) inhibitor and makes a small contribution to pathogenesis. Is presumed either to be responsible for exporting depudecin, to provide self-protection, or both. In Alternaria brassicicola (Dark leaf spot agent), this protein is Efflux pump DEP3.